The chain runs to 413 residues: Tyrosine--tRNA ligase (413 aa).

A 'HIGH' region motif is present at residues 59–68; that stretch reads PTAPDIHLGH. The short motif at 243–247 is the 'KMSKS' region element; that stretch reads KMSKS. Lys-246 provides a ligand contact to ATP. Positions 351-411 constitute an S4 RNA-binding domain; it reads LAIGQLLKQA…GKRRFARVTL (61 aa).

It belongs to the class-I aminoacyl-tRNA synthetase family. TyrS type 2 subfamily. In terms of assembly, homodimer.

The protein localises to the cytoplasm. It carries out the reaction tRNA(Tyr) + L-tyrosine + ATP = L-tyrosyl-tRNA(Tyr) + AMP + diphosphate + H(+). Catalyzes the attachment of tyrosine to tRNA(Tyr) in a two-step reaction: tyrosine is first activated by ATP to form Tyr-AMP and then transferred to the acceptor end of tRNA(Tyr). The chain is Tyrosine--tRNA ligase from Burkholderia pseudomallei (strain K96243).